A 310-amino-acid chain; its full sequence is Protoheme IX farnesyltransferase (310 aa).

9 helical membrane passes run 26–45 (VMSL…PVTV), 49–71 (IALT…NMWW), 95–115 (GEAL…LGLA), 118–138 (LFAA…YSMW), 147–167 (IVIG…VATG), 174–194 (LFMF…LALF), 220–240 (VLVY…TGIG), 243–263 (LYLA…VRIW), and 289–309 (LFLH…GLGG).

Belongs to the UbiA prenyltransferase family. Protoheme IX farnesyltransferase subfamily. In terms of assembly, interacts with CtaA.

The protein resides in the cell inner membrane. The enzyme catalyses heme b + (2E,6E)-farnesyl diphosphate + H2O = Fe(II)-heme o + diphosphate. Its pathway is porphyrin-containing compound metabolism; heme O biosynthesis; heme O from protoheme: step 1/1. Functionally, converts heme B (protoheme IX) to heme O by substitution of the vinyl group on carbon 2 of heme B porphyrin ring with a hydroxyethyl farnesyl side group. In Cereibacter sphaeroides (strain ATCC 17029 / ATH 2.4.9) (Rhodobacter sphaeroides), this protein is Protoheme IX farnesyltransferase.